The following is a 309-amino-acid chain: Taste receptor type 2 member 8 (309 aa).

Residues 1–7 (MFSPADN) are Extracellular-facing. Residues 8 to 28 (IFIILITGEFILGILGNGYIA) form a helical membrane-spanning segment. Over 29–50 (LVNWIDWIKKKKISTTDYILTN) the chain is Cytoplasmic. A helical membrane pass occupies residues 51–71 (LVISRICLISVIVVNGIVTVL). Residues 72–82 (YPDVYTKSKLQ) are Extracellular-facing. A helical membrane pass occupies residues 83–103 (IAISTFWTFANYLNMWFTTCL). Topologically, residues 104–131 (NVFYFLKIANSSHPLFLWLKQKIDMVVR) are cytoplasmic. A helical membrane pass occupies residues 132–152 (WILLGCFAISLLVSLIIAIVL). The Extracellular segment spans residues 153–184 (SRDYRFHAIAKHKRNITEMFHVSKMLYFEPLT). Asn-167 carries an N-linked (GlcNAc...) asparagine glycan. The chain crosses the membrane as a helical span at residues 185–205 (LFNLLAIVPFIVSLMSFFLLV). Residues 206-239 (RSLQRHTKQIKLYATGGRDPSTEAHVRAIKTMTS) lie on the Cytoplasmic side of the membrane. A helical membrane pass occupies residues 240-260 (FIFFFFLYYITSLLVTFSYLM). Over 261-266 (TKYKLA) the chain is Extracellular. The chain crosses the membrane as a helical span at residues 267 to 287 (MAFGEIVAILYPSGHSFILII). At 288 to 309 (LNNKLRQASVRMLTCIKITCVI) the chain is on the cytoplasmic side.

This sequence belongs to the G-protein coupled receptor T2R family.

It localises to the membrane. Receptor that may play a role in the perception of bitterness and is gustducin-linked. May play a role in sensing the chemical composition of the gastrointestinal content. The activity of this receptor may stimulate alpha gustducin, mediate PLC-beta-2 activation and lead to the gating of TRPM5. The polypeptide is Taste receptor type 2 member 8 (TAS2R8) (Pongo pygmaeus (Bornean orangutan)).